We begin with the raw amino-acid sequence, 37 residues long: Large ribosomal subunit protein bL36 (37 aa).

Belongs to the bacterial ribosomal protein bL36 family.

The protein is Large ribosomal subunit protein bL36 of Beutenbergia cavernae (strain ATCC BAA-8 / DSM 12333 / CCUG 43141 / JCM 11478 / NBRC 16432 / NCIMB 13614 / HKI 0122).